The chain runs to 369 residues: Methionine import ATP-binding protein MetN (369 aa).

Residues 31 to 266 enclose the ABC transporter domain; the sequence is VEMKDVRRMF…PQSPVTQSML (236 aa). An ATP-binding site is contributed by 63–70; that stretch reads GRSGAGKS.

Belongs to the ABC transporter superfamily. Methionine importer (TC 3.A.1.24) family. The complex is composed of two ATP-binding proteins (MetN), two transmembrane proteins (MetI) and a solute-binding protein (MetQ).

The protein localises to the cell inner membrane. It catalyses the reaction L-methionine(out) + ATP + H2O = L-methionine(in) + ADP + phosphate + H(+). The catalysed reaction is D-methionine(out) + ATP + H2O = D-methionine(in) + ADP + phosphate + H(+). Part of the ABC transporter complex MetNIQ involved in methionine import. Responsible for energy coupling to the transport system. In Brucella abortus (strain 2308), this protein is Methionine import ATP-binding protein MetN.